A 285-amino-acid chain; its full sequence is MSLQQKIKAYLKLGKLGVVSLLDLAAVAGAFLAYKHGISLLPIIPMFIGGTLASMGAMIINSGIEIDRDKVMSRTSKRPTVVGYVNRKEAIIVGSLLAILGTALGFIDNILTAFFIALGVVIYIFVYTILLKPRTWLNIVIGGFAGSAAAWAGYTSLTNSLTLEGFLLGFLIFMWTPGHFWSLALKYREDYVNAHYPMLPAVVGITTSARAIAISNALMIPIVLLLGYYINLIALIAFSILSLFLMFLSYRLILNPTKEEAIKSFIFSNIYLMLILLIMIIVKLI.

The next 9 helical transmembrane spans lie at 13–33, 40–60, 89–109, 110–130, 137–157, 165–185, 194–214, 230–252, and 265–285; these read LGKLGVVSLLDLAAVAGAFLA, LLPIIPMFIGGTLASMGAMII, EAIIVGSLLAILGTALGFIDN, ILTAFFIALGVVIYIFVYTIL, LNIVIGGFAGSAAAWAGYTSL, GFLLGFLIFMWTPGHFWSLAL, AHYPMLPAVVGITTSARAIAI, INLIALIAFSILSLFLMFLSYRL, and FIFSNIYLMLILLIMIIVKLI.

The protein belongs to the UbiA prenyltransferase family. Protoheme IX farnesyltransferase subfamily.

It is found in the cell membrane. It carries out the reaction heme b + (2E,6E)-farnesyl diphosphate + H2O = Fe(II)-heme o + diphosphate. It participates in porphyrin-containing compound metabolism; heme O biosynthesis; heme O from protoheme: step 1/1. In terms of biological role, converts heme B (protoheme IX) to heme O by substitution of the vinyl group on carbon 2 of heme B porphyrin ring with a hydroxyethyl farnesyl side group. The protein is Protoheme IX farnesyltransferase of Saccharolobus islandicus (strain Y.N.15.51 / Yellowstone #2) (Sulfolobus islandicus).